Reading from the N-terminus, the 676-residue chain is MNPKDLTAVSKAISDLFYSKNEHIITVCSDYLRHWRDVVKQDDEVIVEKICSVCELENSCLTGEMITMFENVSVILPQDIFGVNVMFYIISRELEGTHSYHDLIRKLDPYSIFSHFILMDCSDANLKKEIDNATFFKNHYYKQKSGYVISNNNEESEEENEDLEDEECETVKKARKSSKKMPYMEGDDRIKSMGQTLGKWFEQNKTGCSKKDQTLLNYIQTQCTIANCGDLSLSITNRRMPTDSRKLVNWKWVANNTLYPKHGETLDDDMYGCCQVGAARCDYDNTLSELIDAVHNGRVKHSTVEMTKKKKADLLEVLMDPGKNNKKEDGDDPTLFFSINDMDQLLEGDDIIDMEEECEGDEDDVNAKGYDDLYDKKQKELYKKIETGMITVVRLHEMCNDLGIGDYFELILSATEFPCVICDLSILYEFRACFFDLINMSRMAASKVNLNRIKKPGKLFSKAIKNKTNAGCKPLVKGQFLGEKTELEITKRLDEVELTPKQLVDYSIFKCLGGGEDMMKTMAQLDKNNKMEDYGYNFFAEEISPPVLLRCMEGEWLDKFPFMRSIIDRIKDVALSHALPRKRIFCYINPRIMACECNIYETVRSRCLLGVKISLVNTMLKVMKRSQTKTILNQVSSICKEHGIAYEICNIHINKTMKEDKKIIKERLARKRSHPN.

This is an uncharacterized protein from Magallana gigas (Pacific oyster).